The sequence spans 100 residues: NADH-quinone oxidoreductase subunit K (100 aa).

3 helical membrane passes run 4-24, 28-48, and 60-80; these read LQHGLLLAAILFVLGLTGLVI, LLFMLISLEIMINASALAFVV, and VMYILAITLAAAEASIGLALL.

The protein belongs to the complex I subunit 4L family. NDH-1 is composed of 13 different subunits. Subunits NuoA, H, J, K, L, M, N constitute the membrane sector of the complex.

The protein resides in the cell inner membrane. The catalysed reaction is a quinone + NADH + 5 H(+)(in) = a quinol + NAD(+) + 4 H(+)(out). Its function is as follows. NDH-1 shuttles electrons from NADH, via FMN and iron-sulfur (Fe-S) centers, to quinones in the respiratory chain. The immediate electron acceptor for the enzyme in this species is believed to be ubiquinone. Couples the redox reaction to proton translocation (for every two electrons transferred, four hydrogen ions are translocated across the cytoplasmic membrane), and thus conserves the redox energy in a proton gradient. The protein is NADH-quinone oxidoreductase subunit K of Musicola paradisiaca (strain Ech703) (Dickeya paradisiaca).